Here is a 580-residue protein sequence, read N- to C-terminus: Proline--tRNA ligase (580 aa).

Belongs to the class-II aminoacyl-tRNA synthetase family. ProS type 1 subfamily. As to quaternary structure, homodimer.

Its subcellular location is the cytoplasm. The enzyme catalyses tRNA(Pro) + L-proline + ATP = L-prolyl-tRNA(Pro) + AMP + diphosphate. In terms of biological role, catalyzes the attachment of proline to tRNA(Pro) in a two-step reaction: proline is first activated by ATP to form Pro-AMP and then transferred to the acceptor end of tRNA(Pro). As ProRS can inadvertently accommodate and process non-cognate amino acids such as alanine and cysteine, to avoid such errors it has two additional distinct editing activities against alanine. One activity is designated as 'pretransfer' editing and involves the tRNA(Pro)-independent hydrolysis of activated Ala-AMP. The other activity is designated 'posttransfer' editing and involves deacylation of mischarged Ala-tRNA(Pro). The misacylated Cys-tRNA(Pro) is not edited by ProRS. The sequence is that of Proline--tRNA ligase from Mycobacteroides abscessus (strain ATCC 19977 / DSM 44196 / CCUG 20993 / CIP 104536 / JCM 13569 / NCTC 13031 / TMC 1543 / L948) (Mycobacterium abscessus).